A 154-amino-acid polypeptide reads, in one-letter code: Ubiquitin-conjugating enzyme E2 L5 (154 aa).

The region spanning 2–149 is the UBC core domain; sequence AASRRLMKEL…AEEFTKKYGE (148 aa). Cys-86 (glycyl thioester intermediate) is an active-site residue.

This sequence belongs to the ubiquitin-conjugating enzyme family.

It carries out the reaction S-ubiquitinyl-[E1 ubiquitin-activating enzyme]-L-cysteine + [E2 ubiquitin-conjugating enzyme]-L-cysteine = [E1 ubiquitin-activating enzyme]-L-cysteine + S-ubiquitinyl-[E2 ubiquitin-conjugating enzyme]-L-cysteine.. It functions in the pathway protein modification; protein ubiquitination. In terms of biological role, catalyzes the covalent attachment of ubiquitin to other proteins. The protein is Ubiquitin-conjugating enzyme E2 L5 of Homo sapiens (Human).